Reading from the N-terminus, the 241-residue chain is Regulatory protein VirG (241 aa).

Positions 3–117 (HVLVIDDDVA…EFLARIRVAL (115 aa)) constitute a Response regulatory domain. Asp52 bears the 4-aspartylphosphate mark. Residues 129–229 (RRSFYFADWT…ARGAGYFFDA (101 aa)) constitute a DNA-binding region (ompR/PhoB-type).

In terms of processing, phosphorylated by wide host range (WHR) VirA protein.

Its subcellular location is the cytoplasm. Its function is as follows. VirG is required for the positive regulation of at least two vir loci encoded by the Ri plasmid of A.rhizogenes. The sequence is that of Regulatory protein VirG (virG) from Rhizobium rhizogenes (Agrobacterium rhizogenes).